Here is a 303-residue protein sequence, read N- to C-terminus: Porphobilinogen deaminase (303 aa).

C241 carries the S-(dipyrrolylmethanemethyl)cysteine modification.

The protein belongs to the HMBS family. In terms of assembly, monomer. The cofactor is dipyrromethane.

It carries out the reaction 4 porphobilinogen + H2O = hydroxymethylbilane + 4 NH4(+). It functions in the pathway porphyrin-containing compound metabolism; protoporphyrin-IX biosynthesis; coproporphyrinogen-III from 5-aminolevulinate: step 2/4. The protein operates within porphyrin-containing compound metabolism; chlorophyll biosynthesis. Its function is as follows. Tetrapolymerization of the monopyrrole PBG into the hydroxymethylbilane pre-uroporphyrinogen in several discrete steps. This chain is Porphobilinogen deaminase, found in Roseiflexus sp. (strain RS-1).